The sequence spans 121 residues: Phosphoribosyl-ATP pyrophosphatase (121 aa).

The protein belongs to the PRA-PH family.

The protein resides in the cytoplasm. It catalyses the reaction 1-(5-phospho-beta-D-ribosyl)-ATP + H2O = 1-(5-phospho-beta-D-ribosyl)-5'-AMP + diphosphate + H(+). It functions in the pathway amino-acid biosynthesis; L-histidine biosynthesis; L-histidine from 5-phospho-alpha-D-ribose 1-diphosphate: step 2/9. The chain is Phosphoribosyl-ATP pyrophosphatase from Burkholderia cenocepacia (strain ATCC BAA-245 / DSM 16553 / LMG 16656 / NCTC 13227 / J2315 / CF5610) (Burkholderia cepacia (strain J2315)).